We begin with the raw amino-acid sequence, 386 residues long: Cytochrome b (386 aa).

The next 4 helical transmembrane spans lie at 32–52 (LGSL…FLAM), 76–98 (YLIR…AHIG), 113–133 (VWVI…LGYC), and 179–199 (FFAL…MHLM). Heme b-binding residues include H82 and H96. 2 residues coordinate heme b: H183 and H197. An a ubiquinone-binding site is contributed by H202. 4 helical membrane passes run 225-245 (FVFK…LFVF), 289-309 (LGGV…PVTD), 321-341 (ISKT…QLGQ), and 348-368 (FIQL…FIVP).

It belongs to the cytochrome b family. As to quaternary structure, fungal cytochrome b-c1 complex contains 10 subunits; 3 respiratory subunits, 2 core proteins and 5 low-molecular weight proteins. Cytochrome b-c1 complex is a homodimer. Heme b is required as a cofactor.

The protein resides in the mitochondrion inner membrane. Its function is as follows. Component of the ubiquinol-cytochrome c reductase complex (complex III or cytochrome b-c1 complex) that is part of the mitochondrial respiratory chain. The b-c1 complex mediates electron transfer from ubiquinol to cytochrome c. Contributes to the generation of a proton gradient across the mitochondrial membrane that is then used for ATP synthesis. The sequence is that of Cytochrome b (COB) from Wickerhamomyces canadensis (Yeast).